Reading from the N-terminus, the 2207-residue chain is Genome polyprotein (2207 aa).

Gly-2 is lipidated: N-myristoyl glycine; by host. Topologically, residues 2–1518 (GAQVSSQKVG…NINRAMTILQ (1517 aa)) are cytoplasmic. Residues 579–599 (GLGDLIEGVVEGVTRNALTPL) form an amphipathic alpha-helix region. Residues 597-613 (TPLTPANNLPDTQSSGP) show a composition bias toward polar residues. Disordered regions lie at residues 597 to 620 (TPLT…KETP) and 628 to 647 (GATN…VIQK). Catalysis depends on for protease 2A activity residues His-899 and Asp-917. Zn(2+) contacts are provided by Cys-934 and Cys-936. Cys-988 functions as the For protease 2A activity in the catalytic mechanism. The Zn(2+) site is built by Cys-994 and His-996. Residues 1126 to 1198 (GDSWLKKFTE…HQSCPSQEHQ (73 aa)) form a membrane-binding region. Positions 1126 to 1264 (GDSWLKKFTE…SPGTGKSVAT (139 aa)) are oligomerization. Residues 1147–1151 (SNKIS) form an RNA-binding region. The SF3 helicase domain occupies 1230–1386 (EHTINNYVQF…SEYSRDGKLN (157 aa)). Residue 1254-1261 (GSPGTGKS) coordinates ATP. Zn(2+) is bound by residues Cys-1394, Cys-1397, Cys-1406, and Cys-1411. A C4-type zinc finger spans residues 1394–1411 (CKNCHHPANFKRCCPLVC). An RNA-binding region spans residues 1438 to 1445 (ERNRRSSI). Residues 1449 to 1454 (MEALFQ) are oligomerization. An intramembrane segment occupies 1519-1534 (AVTTFAAVAGVVYVMY). Residues 1535-2207 (KLFAGHQGAY…TLYRRWLDSF (673 aa)) lie on the Cytoplasmic side of the membrane. The residue at position 1544 (Tyr-1544) is an O-(5'-phospho-RNA)-tyrosine. The 179-residue stretch at 1564-1742 (GPGFDYAVAM…FAAALKRSYF (179 aa)) folds into the Peptidase C3 domain. Catalysis depends on for protease 3C activity residues His-1603, Glu-1634, and Cys-1710. Positions 1973–2088 (EKLFAFDYTG…SYPHEVDASL (116 aa)) constitute a RdRp catalytic domain. Residues Asp-1979 and Asp-2074 each coordinate Mg(2+).

This sequence belongs to the picornaviruses polyprotein family. Interacts with capsid protein VP1 and capsid protein VP3 to form heterotrimeric protomers. In terms of assembly, interacts with capsid protein VP0, and capsid protein VP3 to form heterotrimeric protomers. Interacts with human PVR. Five protomers subsequently associate to form pentamers which serve as building blocks for the capsid. Interacts with capsid protein VP2, capsid protein VP3 and capsid protein VP4 following cleavage of capsid protein VP0. As to quaternary structure, interacts with capsid protein VP1 and capsid protein VP3 in the mature capsid. Interacts with capsid protein VP0 and capsid protein VP1 to form heterotrimeric protomers. Five protomers subsequently associate to form pentamers which serve as building blocks for the capsid. Interacts with capsid protein VP4 in the mature capsid. Interacts with protein 2C; this interaction may be important for virion morphogenesis. In terms of assembly, interacts with capsid protein VP1 and capsid protein VP3. As to quaternary structure, homodimer. Homohexamer; forms a hexameric ring structure with 6-fold symmetry characteristic of AAA+ ATPases. Interacts (via N-terminus) with host RTN3 (via reticulon domain); this interaction is important for viral replication. Interacts with capsid protein VP3; this interaction may be important for virion morphogenesis. In terms of assembly, interacts with protein 3CD. As to quaternary structure, homodimer. Interacts with host GBF1. Interacts (via GOLD domain) with host ACBD3 (via GOLD domain); this interaction allows the formation of a viral protein 3A/ACBD3 heterotetramer with a 2:2 stoichiometry, which will stimulate the recruitment of host PI4KB in order to synthesize PI4P at the viral RNA replication sites. Interacts with RNA-directed RNA polymerase. In terms of assembly, interacts with protein 3AB and with RNA-directed RNA polymerase. As to quaternary structure, interacts with Viral protein genome-linked and with protein 3CD. The cofactor is Mg(2+). In terms of processing, specific enzymatic cleavages in vivo by the viral proteases yield processing intermediates and the mature proteins. Myristoylation is required for the formation of pentamers during virus assembly. Further assembly of 12 pentamers and a molecule of genomic RNA generates the provirion. Post-translationally, during virion maturation, immature virions are rendered infectious following cleavage of VP0 into VP4 and VP2. This maturation seems to be an autocatalytic event triggered by the presence of RNA in the capsid and it is followed by a conformational change infectious virion. In terms of processing, myristoylation is required during RNA encapsidation and formation of the mature virus particle. VPg is uridylylated by the polymerase into VPg-pUpU. This acts as a nucleotide-peptide primer for the genomic RNA replication.

Its subcellular location is the virion. The protein localises to the host cytoplasm. It is found in the host cytoplasmic vesicle membrane. The protein resides in the host nucleus. The enzyme catalyses a ribonucleoside 5'-triphosphate + H2O = a ribonucleoside 5'-diphosphate + phosphate + H(+). The catalysed reaction is Selective cleavage of Tyr-|-Gly bond in the picornavirus polyprotein.. It carries out the reaction RNA(n) + a ribonucleoside 5'-triphosphate = RNA(n+1) + diphosphate. It catalyses the reaction Selective cleavage of Gln-|-Gly bond in the poliovirus polyprotein. In other picornavirus reactions Glu may be substituted for Gln, and Ser or Thr for Gly.. Replication or transcription is subject to high level of random mutations by the nucleotide analog ribavirin. Its function is as follows. Forms an icosahedral capsid of pseudo T=3 symmetry with capsid proteins VP2 and VP3. The capsid is 300 Angstroms in diameter, composed of 60 copies of each capsid protein and enclosing the viral positive strand RNA genome. Capsid protein VP1 mainly forms the vertices of the capsid. Capsid protein VP1 interacts with host cell receptor PVR to provide virion attachment to target host cells. This attachment induces virion internalization predominantly through clathrin- and caveolin-independent endocytosis in Hela cells and through caveolin-mediated endocytosis in brain microvascular endothelial cells. Tyrosine kinases are probably involved in the entry process. Virus binding to PVR induces increased junctional permeability and rearrangement of junctional proteins. Modulation of endothelial tight junctions, as well as cytolytic infection of endothelial cells themselves, may result in loss of endothelial integrity which may help the virus to reach the CNS. After binding to its receptor, the capsid undergoes conformational changes. Capsid protein VP1 N-terminus (that contains an amphipathic alpha-helix) and capsid protein VP4 are externalized. Together, they shape a pore in the host membrane through which viral genome is translocated to host cell cytoplasm. Functionally, forms an icosahedral capsid of pseudo T=3 symmetry with capsid proteins VP2 and VP3. The capsid is 300 Angstroms in diameter, composed of 60 copies of each capsid protein and enclosing the viral positive strand RNA genome. Lies on the inner surface of the capsid shell. After binding to the host receptor, the capsid undergoes conformational changes. Capsid protein VP4 is released, Capsid protein VP1 N-terminus is externalized, and together, they shape a pore in the host membrane through which the viral genome is translocated into the host cell cytoplasm. In terms of biological role, component of immature procapsids, which is cleaved into capsid proteins VP4 and VP2 after maturation. Allows the capsid to remain inactive before the maturation step. Its function is as follows. Cysteine protease that cleaves viral polyprotein and specific host proteins. It is responsible for the autocatalytic cleavage between the P1 and P2 regions, which is the first cleavage occurring in the polyprotein. Also cleaves the host translation initiation factor EIF4G1, in order to shut down the capped cellular mRNA translation. Inhibits the host nucleus-cytoplasm protein and RNA trafficking by cleaving host members of the nuclear pores including NUP98, NUP62 and NUP153. Counteracts stress granule formation probably by antagonizing its assembly or promoting its dissassembly. Cleaves and inhibits host IFIH1/MDA5, thereby inhibiting the type-I IFN production and the establishment of the antiviral state. Cleaves and inhibits host MAVS, thereby inhibiting the type-I IFN production and the establishment of the antiviral state. Functionally, plays an essential role in the virus replication cycle by acting as a viroporin. Creates a pore in the host endoplasmic reticulum and as a consequence releases Ca2+ in the cytoplasm of infected cell. In turn, high levels of cytoplasmic calcium may trigger membrane trafficking and transport of viral ER-associated proteins to viroplasms, sites of viral genome replication. Induces and associates with structural rearrangements of intracellular membranes. Displays RNA-binding, nucleotide binding and NTPase activities. May play a role in virion morphogenesis and viral RNA encapsidation by interacting with the capsid protein VP3. In terms of biological role, localizes the viral replication complex to the surface of membranous vesicles. Together with protein 3CD binds the Cis-Active RNA Element (CRE) which is involved in RNA synthesis initiation. Acts as a cofactor to stimulate the activity of 3D polymerase, maybe through a nucleid acid chaperone activity. Its function is as follows. Localizes the viral replication complex to the surface of membranous vesicles. It inhibits host cell endoplasmic reticulum-to-Golgi apparatus transport and causes the disassembly of the Golgi complex, possibly through GBF1 interaction. This would result in depletion of MHC, trail receptors and IFN receptors at the host cell surface. Plays an essential role in viral RNA replication by recruiting ACBD3 and PI4KB at the viral replication sites, thereby allowing the formation of the rearranged membranous structures where viral replication takes place. Functionally, acts as a primer for viral RNA replication and remains covalently bound to viral genomic RNA. VPg is uridylylated prior to priming replication into VPg-pUpU. The oriI viral genomic sequence may act as a template for this. The VPg-pUpU is then used as primer on the genomic RNA poly(A) by the RNA-dependent RNA polymerase to replicate the viral genome. During genome replication, the VPg-RNA linkage is removed by the host TDP2, thereby accelerating replication. During the late stage of the replication cycle, host TDP2 is excluded from sites of viral RNA synthesis and encapsidation, allowing for the generation of progeny virions. Involved in the viral replication complex and viral polypeptide maturation. It exhibits protease activity with a specificity and catalytic efficiency that is different from protease 3C. Protein 3CD lacks polymerase activity. Protein 3CD binds to the 5'UTR of the viral genome. In terms of biological role, major viral protease that mediates proteolytic processing of the polyprotein. Cleaves host EIF5B, contributing to host translation shutoff. Also cleaves host PABPC1, contributing to host translation shutoff. Cleaves host RIGI and thus contributes to the inhibition of type I interferon production. Cleaves host NLRP1, triggers host N-glycine-mediated degradation of the autoinhibitory NLRP1 N-terminal fragment. Inhibits the integrated stress response (ISR) in the infected cell by cleaving host G3BP1. Stress granule formation is thus inhibited, which allows protein synthesis and viral replication. Its function is as follows. Replicates the viral genomic RNA on the surface of intracellular membranes. May form linear arrays of subunits that propagate along a strong head-to-tail interaction called interface-I. Covalently attaches UMP to a tyrosine of VPg, which is used to prime RNA synthesis. The positive stranded RNA genome is first replicated at virus induced membranous vesicles, creating a dsRNA genomic replication form. This dsRNA is then used as template to synthesize positive stranded RNA genomes. ss(+)RNA genomes are either translated, replicated or encapsidated. The chain is Genome polyprotein from Homo sapiens (Human).